The following is a 235-amino-acid chain: Peptidase E (235 aa).

Catalysis depends on charge relay system residues S122, D137, and H159.

The protein belongs to the peptidase S51 family.

It is found in the cytoplasm. The catalysed reaction is Dipeptidase E catalyzes the hydrolysis of dipeptides Asp-|-Xaa. It does not act on peptides with N-terminal Glu, Asn or Gln, nor does it cleave isoaspartyl peptides.. Its function is as follows. Hydrolyzes dipeptides containing N-terminal aspartate residues. May play a role in allowing the cell to use peptide aspartate to spare carbon otherwise required for the synthesis of the aspartate family of amino acids. This Shewanella denitrificans (strain OS217 / ATCC BAA-1090 / DSM 15013) protein is Peptidase E.